Here is a 485-residue protein sequence, read N- to C-terminus: Amino acid permease 1 (485 aa).

Residues 1 to 15 (MKSFNTEGHNHSTAE) are compositionally biased toward polar residues. A disordered region spans residues 1–35 (MKSFNTEGHNHSTAESGDAYTVSDPTKNVDEDGRE). Over 1–40 (MKSFNTEGHNHSTAESGDAYTVSDPTKNVDEDGREKRTGT) the chain is Cytoplasmic. 2 helical membrane passes run 41 to 61 (WLTASAHIITAVIGSGVLSLA) and 62 to 82 (WAIAQLGWIAGTSILLIFSFI). The Cytoplasmic portion of the chain corresponds to 83 to 129 (TYFTSTMLADCYRAPDPVTGKRNYTYMDVVRSYLGGRKVQLCGVAQY). A helical membrane pass occupies residues 130–150 (GNLIGVTVGYTITASISLVAV). At 151–166 (GKSNCFHDKGHTADCT) the chain is on the extracellular side. Residues 167-187 (ISNYPYMAVFGIIQVILSQIP) form a helical membrane-spanning segment. The Cytoplasmic portion of the chain corresponds to 188–194 (NFHKLSF). A helical transmembrane segment spans residues 195–215 (LSIMAAVMSFTYATIGIGLAI). Residues 216–245 (ATVAGGKVGKTSMTGTAVGVDVTAAQKIWR) are Extracellular-facing. Residues 246-266 (SFQAVGDIAFAYAYATVLIEI) form a helical membrane-spanning segment. Over 267-285 (QDTLRSSPAENKAMKRASL) the chain is Cytoplasmic. The helical transmembrane segment at 286–306 (VGVSTTTFFYILCGCIGYAAF) threads the bilayer. The Extracellular portion of the chain corresponds to 307–318 (GNNAPGDFLTDF). A helical transmembrane segment spans residues 319–339 (GFFEPFWLIDFANACIAVHLI). The Cytoplasmic portion of the chain corresponds to 340–394 (GAYQVFAQPIFQFVEKKCNRNYPDNKFITSEYSVNVPFLGKFNISLFRLVWRTAY). Helical transmembrane passes span 395–415 (VVITTVVAMIFPFFNAILGLI) and 416–436 (GAASFWPLTVYFPVEMHIAQT). The Cytoplasmic portion of the chain corresponds to 437-450 (KIKKYSARWIALKT). Residues 451–471 (MCYVCLIVSLLAAAGSIAGLI) form a helical membrane-spanning segment. At 472-485 (SSVKTYKPFRTMHE) the chain is on the extracellular side.

Belongs to the amino acid/polyamine transporter 2 family. Amino acid/auxin permease (AAAP) (TC 2.A.18.2) subfamily. As to expression, highly expressed in developing pods. Found in the endosperm and in the storage parenchyma and the outer epidermis cells of the developing embryo. Lower levels of expression in flowers, in the vascular system of the cotyledon and in the root epidermal cells, including root hairs and throughout the root tip.

The protein resides in the cell membrane. With respect to regulation, inhibited by carbonylcyanide m-chlorophenylhydrazone and diethylpyrocarbonate (DEPC). Functionally, amino acid-proton symporter. Stereospecific transporter with a broad specificity for histidine, glutamate and neutral amino acids. Reduced affinities for asparagine and valine. Involved in amino acid uptake from the apoplastic cavity into the embryo cells for storage protein accumulation and in root amino acid uptake. The protein is Amino acid permease 1 (AAP1) of Arabidopsis thaliana (Mouse-ear cress).